The following is a 338-amino-acid chain: Protein RecA (338 aa).

66-73 (GPESSGKT) lines the ATP pocket.

The protein belongs to the RecA family.

The protein localises to the cytoplasm. Its function is as follows. Can catalyze the hydrolysis of ATP in the presence of single-stranded DNA, the ATP-dependent uptake of single-stranded DNA by duplex DNA, and the ATP-dependent hybridization of homologous single-stranded DNAs. It interacts with LexA causing its activation and leading to its autocatalytic cleavage. The chain is Protein RecA from Geobacter sulfurreducens (strain ATCC 51573 / DSM 12127 / PCA).